We begin with the raw amino-acid sequence, 445 residues long: Elongation factor 1-alpha (445 aa).

In terms of domain architecture, tr-type G spans K5–S230. A G1 region spans residues G14–S21. G14–S21 serves as a coordination point for GTP. K55 is modified (N6,N6-dimethyllysine). The segment at C70 to D74 is G2. The residue at position 79 (K79) is an N6,N6,N6-trimethyllysine. Residues D91–G94 are G3. Residues D91 to H95 and N153 to D156 contribute to the GTP site. A G4 region spans residues N153–D156. Position 187 is an N6,N6,N6-trimethyllysine (K187). Residues S194–W196 are G5. K261 carries the post-translational modification N6-methyllysine. Residues K306 and K396 each carry the N6,N6,N6-trimethyllysine modification.

It belongs to the TRAFAC class translation factor GTPase superfamily. Classic translation factor GTPase family. EF-Tu/EF-1A subfamily.

The protein resides in the cytoplasm. This protein promotes the GTP-dependent binding of aminoacyl-tRNA to the A-site of ribosomes during protein biosynthesis. The sequence is that of Elongation factor 1-alpha (TEF) from Euglena gracilis.